Reading from the N-terminus, the 375-residue chain is Protein HrmA (375 aa).

In terms of biological role, unknown. May serve a regulatory function. This chain is Protein HrmA (hrmA), found in Pseudomonas syringae pv. syringae.